The chain runs to 94 residues: MKYPKQIRTYCPFCKRHTIHKVERVKKRPRSELSAGQRRFRRILKGYGGFPRPKPEGREKPVKKLDLRFRCTVCGKAHTRGRGFRVKKFELVEV.

Residues cysteine 11, cysteine 14, cysteine 71, and cysteine 74 each coordinate Zn(2+). A C4-type zinc finger spans residues 11–74 (CPFCKRHTIH…LDLRFRCTVC (64 aa)).

Belongs to the eukaryotic ribosomal protein eL42 family. In terms of assembly, part of the 50S ribosomal subunit. Zn(2+) serves as cofactor.

Its function is as follows. Binds to the 23S rRNA. The sequence is that of Large ribosomal subunit protein eL42 from Pyrococcus abyssi (strain GE5 / Orsay).